The following is a 229-amino-acid chain: 2-C-methyl-D-erythritol 4-phosphate cytidylyltransferase (229 aa).

It belongs to the IspD/TarI cytidylyltransferase family. IspD subfamily.

It carries out the reaction 2-C-methyl-D-erythritol 4-phosphate + CTP + H(+) = 4-CDP-2-C-methyl-D-erythritol + diphosphate. It functions in the pathway isoprenoid biosynthesis; isopentenyl diphosphate biosynthesis via DXP pathway; isopentenyl diphosphate from 1-deoxy-D-xylulose 5-phosphate: step 2/6. Functionally, catalyzes the formation of 4-diphosphocytidyl-2-C-methyl-D-erythritol from CTP and 2-C-methyl-D-erythritol 4-phosphate (MEP). This chain is 2-C-methyl-D-erythritol 4-phosphate cytidylyltransferase, found in Clostridium botulinum (strain ATCC 19397 / Type A).